The following is a 65-amino-acid chain: UPF0434 protein RPD_0454 (65 aa).

The protein belongs to the UPF0434 family.

This is UPF0434 protein RPD_0454 from Rhodopseudomonas palustris (strain BisB5).